Consider the following 357-residue polypeptide: 3-isopropylmalate dehydrogenase (357 aa).

Residue 76–89 coordinates NAD(+); it reads GPQWDTIDPALRPE. The substrate site is built by Arg96, Arg106, Arg134, and Asp224. 3 residues coordinate Mg(2+): Asp224, Asp248, and Asp252. An NAD(+)-binding site is contributed by 282-294; it reads GSAPDIAGQGVAN.

It belongs to the isocitrate and isopropylmalate dehydrogenases family. LeuB type 1 subfamily. As to quaternary structure, homodimer. Requires Mg(2+) as cofactor. Mn(2+) serves as cofactor.

It localises to the cytoplasm. It catalyses the reaction (2R,3S)-3-isopropylmalate + NAD(+) = 4-methyl-2-oxopentanoate + CO2 + NADH. The protein operates within amino-acid biosynthesis; L-leucine biosynthesis; L-leucine from 3-methyl-2-oxobutanoate: step 3/4. In terms of biological role, catalyzes the oxidation of 3-carboxy-2-hydroxy-4-methylpentanoate (3-isopropylmalate) to 3-carboxy-4-methyl-2-oxopentanoate. The product decarboxylates to 4-methyl-2 oxopentanoate. This chain is 3-isopropylmalate dehydrogenase, found in Xylella fastidiosa (strain Temecula1 / ATCC 700964).